A 337-amino-acid polypeptide reads, in one-letter code: Casein kinase II subunit alpha (337 aa).

The Protein kinase domain maps to 47 to 332; the sequence is YEIIRKIGRG…TREAMEHPYF (286 aa). ATP-binding positions include 53 to 61 and Lys76; that span reads IGRGKYSEV. Asp164 serves as the catalytic Proton acceptor.

The protein belongs to the protein kinase superfamily. CMGC Ser/Thr protein kinase family. CK2 subfamily. In terms of assembly, tetramer of two alpha and two beta chains.

It carries out the reaction L-seryl-[protein] + ATP = O-phospho-L-seryl-[protein] + ADP + H(+). It catalyses the reaction L-threonyl-[protein] + ATP = O-phospho-L-threonyl-[protein] + ADP + H(+). Functionally, casein kinases are operationally defined by their preferential utilization of acidic proteins such as caseins as substrates. The alpha chain contains the catalytic site. This chain is Casein kinase II subunit alpha (casK), found in Dictyostelium discoideum (Social amoeba).